The sequence spans 119 residues: Large ribosomal subunit protein uL18 (119 aa).

Belongs to the universal ribosomal protein uL18 family. In terms of assembly, part of the 50S ribosomal subunit; part of the 5S rRNA/L5/L18/L25 subcomplex. Contacts the 5S and 23S rRNAs.

Its function is as follows. This is one of the proteins that bind and probably mediate the attachment of the 5S RNA into the large ribosomal subunit, where it forms part of the central protuberance. In Nitratidesulfovibrio vulgaris (strain DSM 19637 / Miyazaki F) (Desulfovibrio vulgaris), this protein is Large ribosomal subunit protein uL18.